An 888-amino-acid chain; its full sequence is DNA mismatch repair protein MutS (888 aa).

Residue 641-648 participates in ATP binding; sequence GPNMAGKS.

The protein belongs to the DNA mismatch repair MutS family.

Its function is as follows. This protein is involved in the repair of mismatches in DNA. It is possible that it carries out the mismatch recognition step. This protein has a weak ATPase activity. The polypeptide is DNA mismatch repair protein MutS (Rickettsia bellii (strain RML369-C)).